A 184-amino-acid polypeptide reads, in one-letter code: Dual-action ribosomal maturation protein DarP (184 aa).

The disordered stretch occupies residues 1-27; that stretch reads MSIPDTEIPVDDDGYDENGYDRPSKSQ. Over residues 8 to 18 the composition is skewed to acidic residues; sequence IPVDDDGYDEN.

Belongs to the DarP family.

It localises to the cytoplasm. Member of a network of 50S ribosomal subunit biogenesis factors which assembles along the 30S-50S interface, preventing incorrect 23S rRNA structures from forming. Promotes peptidyl transferase center (PTC) maturation. The chain is Dual-action ribosomal maturation protein DarP from Bordetella avium (strain 197N).